We begin with the raw amino-acid sequence, 306 residues long: UDP-3-O-acyl-N-acetylglucosamine deacetylase (306 aa).

Zn(2+) is bound by residues His79, His238, and Asp242. His265 (proton donor) is an active-site residue.

It belongs to the LpxC family. Requires Zn(2+) as cofactor.

The catalysed reaction is a UDP-3-O-[(3R)-3-hydroxyacyl]-N-acetyl-alpha-D-glucosamine + H2O = a UDP-3-O-[(3R)-3-hydroxyacyl]-alpha-D-glucosamine + acetate. It functions in the pathway glycolipid biosynthesis; lipid IV(A) biosynthesis; lipid IV(A) from (3R)-3-hydroxytetradecanoyl-[acyl-carrier-protein] and UDP-N-acetyl-alpha-D-glucosamine: step 2/6. In terms of biological role, catalyzes the hydrolysis of UDP-3-O-myristoyl-N-acetylglucosamine to form UDP-3-O-myristoylglucosamine and acetate, the committed step in lipid A biosynthesis. This is UDP-3-O-acyl-N-acetylglucosamine deacetylase from Shewanella sp. (strain ANA-3).